The following is a 976-amino-acid chain: Vacuolar membrane protease (976 aa).

Residues 1–15 (MKLKSVFRSVLKYRK) are Cytoplasmic-facing. A helical membrane pass occupies residues 16–36 (TNLSLLLLITYSIITLLYIFD). Residues 37-359 (HERYKLNLPK…KFFVISAKTL (323 aa)) lie on the Vacuolar side of the membrane. Asn96 and Asn121 each carry an N-linked (GlcNAc...) asparagine glycan. His156 and Asp168 together coordinate Zn(2+). An N-linked (GlcNAc...) asparagine glycan is attached at Asn189. The active-site Proton acceptor is Glu200. Zn(2+) is bound at residue Glu201. Residues Asn212 and Asn217 are each glycosylated (N-linked (GlcNAc...) asparagine). Zn(2+) is bound by residues Glu226 and His300. A helical transmembrane segment spans residues 360-380 (FYWNCIFLLVSPVVAIGLYLI). Over 381-392 (SRDRMTWKSHSW) the chain is Cytoplasmic. The helical transmembrane segment at 393 to 412 (LSWTRFPLSLAAGIIVQKLF) threads the bilayer. Residues 413–428 (SNDIIRSNPLTFSRNY) are Vacuolar-facing. Residues 429–449 (FWPISAFFTQVIFTSYVLINC) traverse the membrane as a helical segment. The Cytoplasmic segment spans residues 450–461 (SNFFFPCADMKS). Residues 462 to 482 (LSIIELFIILWTILLFTSKLL) traverse the membrane as a helical segment. Topologically, residues 483 to 496 (YSSDYRYTGLYPLS) are vacuolar. A helical transmembrane segment spans residues 497–517 (IFFLLSTIAAILRLLALALGM). At 518–627 (RTRKRLGREC…NSLKLEYTDY (110 aa)) the chain is on the cytoplasmic side. The interval 528-610 (RDHHSNYSSH…PLLKGSNSME (83 aa)) is disordered. Residues 549-558 (NLEQPQDQFT) are compositionally biased toward polar residues. Over residues 559-570 (SSQDDQASIQDD) the composition is skewed to low complexity. Basic and acidic residues predominate over residues 582–601 (NVDEDHGMDSSSQQHDERVP). Residues 628 to 648 (AWIIQFLLIVPIPSFILFNSV) traverse the membrane as a helical segment. Topologically, residues 649–668 (DVIMDALNHTVQEGSKATFD) are vacuolar. Residue Asn656 is glycosylated (N-linked (GlcNAc...) asparagine). Residues 669 to 689 (VLRFGMVGSILMALPILPFFY) traverse the membrane as a helical segment. Residues 690 to 692 (KVN) are Cytoplasmic-facing. Residues 693–713 (YITISLTALLFLISASKTLLV) traverse the membrane as a helical segment. The Vacuolar segment spans residues 714 to 976 (HPFTNSNPLK…LVIVKDAIIL (263 aa)). N-linked (GlcNAc...) asparagine glycosylation is found at Asn768, Asn796, Asn811, Asn866, and Asn937.

It belongs to the peptidase M28 family. It depends on Zn(2+) as a cofactor.

It is found in the vacuole membrane. May be involved in vacuolar sorting and osmoregulation. The chain is Vacuolar membrane protease from Saccharomyces cerevisiae (strain RM11-1a) (Baker's yeast).